Consider the following 424-residue polypeptide: Serine--tRNA ligase (424 aa).

A compositionally biased stretch (basic and acidic residues) spans 1–15 (MIDPKLLRTDPDAVR). Positions 1-27 (MIDPKLLRTDPDAVRRSQAARGEDSSV) are disordered. Position 230–232 (230–232 (TSE)) interacts with L-serine. ATP contacts are provided by residues 261 to 263 (RRE) and Val-277. Glu-284 contacts L-serine. 348-351 (EITS) contacts ATP. Thr-382 is a binding site for L-serine.

This sequence belongs to the class-II aminoacyl-tRNA synthetase family. Type-1 seryl-tRNA synthetase subfamily. In terms of assembly, homodimer. The tRNA molecule binds across the dimer.

Its subcellular location is the cytoplasm. The catalysed reaction is tRNA(Ser) + L-serine + ATP = L-seryl-tRNA(Ser) + AMP + diphosphate + H(+). It catalyses the reaction tRNA(Sec) + L-serine + ATP = L-seryl-tRNA(Sec) + AMP + diphosphate + H(+). Its pathway is aminoacyl-tRNA biosynthesis; selenocysteinyl-tRNA(Sec) biosynthesis; L-seryl-tRNA(Sec) from L-serine and tRNA(Sec): step 1/1. Catalyzes the attachment of serine to tRNA(Ser). Is also able to aminoacylate tRNA(Sec) with serine, to form the misacylated tRNA L-seryl-tRNA(Sec), which will be further converted into selenocysteinyl-tRNA(Sec). This chain is Serine--tRNA ligase, found in Cutibacterium acnes (strain DSM 16379 / KPA171202) (Propionibacterium acnes).